We begin with the raw amino-acid sequence, 139 residues long: ATP synthase epsilon chain (139 aa).

Belongs to the ATPase epsilon chain family. F-type ATPases have 2 components, CF(1) - the catalytic core - and CF(0) - the membrane proton channel. CF(1) has five subunits: alpha(3), beta(3), gamma(1), delta(1), epsilon(1). CF(0) has three main subunits: a, b and c.

It localises to the cell inner membrane. In terms of biological role, produces ATP from ADP in the presence of a proton gradient across the membrane. This chain is ATP synthase epsilon chain, found in Pseudomonas entomophila (strain L48).